Here is a 500-residue protein sequence, read N- to C-terminus: Cysteine-rich secretory protein LCCL domain-containing 1 (500 aa).

The first 23 residues, M1–A23, serve as a signal peptide directing secretion. The region spanning L66–Y206 is the SCP domain. Over residues E254–R280 the composition is skewed to basic and acidic residues. Residues E254–N281 are disordered. 2 LCCL domains span residues M289–F384 and T390–K492. Cystine bridges form between C295–C313, C317–C337, C396–C418, and C422–C445.

Belongs to the CRISP family.

The protein localises to the secreted. The sequence is that of Cysteine-rich secretory protein LCCL domain-containing 1 (CRISPLD1) from Homo sapiens (Human).